The primary structure comprises 219 residues: Elongation factor Ts (219 aa).

Residues 82 to 85 form an involved in Mg(2+) ion dislocation from EF-Tu region; it reads TDFV.

This sequence belongs to the EF-Ts family.

The protein resides in the cytoplasm. Its function is as follows. Associates with the EF-Tu.GDP complex and induces the exchange of GDP to GTP. It remains bound to the aminoacyl-tRNA.EF-Tu.GTP complex up to the GTP hydrolysis stage on the ribosome. The polypeptide is Elongation factor Ts (Anaeromyxobacter sp. (strain Fw109-5)).